The sequence spans 475 residues: Glycogen synthase (475 aa).

Residue Lys15 participates in ADP-alpha-D-glucose binding.

The protein belongs to the glycosyltransferase 1 family. Bacterial/plant glycogen synthase subfamily.

The enzyme catalyses [(1-&gt;4)-alpha-D-glucosyl](n) + ADP-alpha-D-glucose = [(1-&gt;4)-alpha-D-glucosyl](n+1) + ADP + H(+). The protein operates within glycan biosynthesis; glycogen biosynthesis. Its function is as follows. Synthesizes alpha-1,4-glucan chains using ADP-glucose. This Anaeromyxobacter sp. (strain K) protein is Glycogen synthase.